A 301-amino-acid polypeptide reads, in one-letter code: Outer membrane porin G (301 aa).

The signal sequence occupies residues 1–21; sequence MKKLLPCTALVMCAGMACAQA. Beta stranded transmembrane passes span 27–35, 47–57, 64–72, 89–98, 104–112, 129–136, 149–158, 172–182, 186–195, 201–209, 213–222, 230–238, 240–248, 254–265, 269–279, and 289–300; these read WHFNIGAMY, MDGLAEPSVYF, WRIALAYYQ, RPELEVHYQF, FSFGLTGGF, NMQRWKIA, FNGWLSMYKF, VETETGLQYTF, VALRVNYYLE, DDSRNNGEF, EIRAYLPLTL, YTRIGLDRW, NWDWQDDIE, FNRVGLFYGYDF, LSVSLEYAFEW, and KFHYAGVGVNYS.

As to quaternary structure, monomer.

It is found in the cell outer membrane. Functionally, forms channels functionally larger than those of classical porins. Its function is as follows. May act as a regulator of the RCS-phosphorelay signal transduction pathway. This is Outer membrane porin G (ompG) from Escherichia coli (strain K12).